Here is a 116-residue protein sequence, read N- to C-terminus: Large ribosomal subunit protein bL19 (116 aa).

It belongs to the bacterial ribosomal protein bL19 family.

In terms of biological role, this protein is located at the 30S-50S ribosomal subunit interface and may play a role in the structure and function of the aminoacyl-tRNA binding site. The chain is Large ribosomal subunit protein bL19 from Roseiflexus castenholzii (strain DSM 13941 / HLO8).